A 331-amino-acid polypeptide reads, in one-letter code: Junctional sarcoplasmic reticulum protein 1 (331 aa).

2 disordered regions span residues 1 to 118 (MSMT…EELP) and 157 to 331 (RVPE…KGRD). The mediates interaction with CACNA1S stretch occupies residues 3–76 (MTTRAWEELD…EKEPAARGTP (74 aa)). Composition is skewed to basic and acidic residues over residues 21 to 35 (LEDHSALAETQEDRA) and 61 to 71 (TRPKKMEKEPA). Pro residues-rich tracts occupy residues 103–112 (PLQPPPPPPA) and 161–175 (PWVPPSSAPREPSSP). Basic and acidic residues-rich tracts occupy residues 222–242 (AVREDRVTLADRGPKERPRRE) and 250–302 (PRKE…EPRK). Basic residues predominate over residues 320–331 (SRQKLRAGKGRD).

Interacts with CACNA1S, CACNB1 and calsequestrin.

The protein localises to the sarcoplasmic reticulum membrane. The protein resides in the endoplasmic reticulum membrane. Its function is as follows. Involved in skeletal muscle excitation/contraction coupling (EC), probably acting as a regulator of the voltage-sensitive calcium channel CACNA1S. EC is a physiological process whereby an electrical signal (depolarization of the plasma membrane) is converted into a chemical signal, a calcium gradient, by the opening of ryanodine receptor calcium release channels. May regulate CACNA1S membrane targeting and activity. The polypeptide is Junctional sarcoplasmic reticulum protein 1 (JSRP1) (Homo sapiens (Human)).